A 460-amino-acid polypeptide reads, in one-letter code: tRNA modification GTPase MnmE (460 aa).

3 residues coordinate (6S)-5-formyl-5,6,7,8-tetrahydrofolate: arginine 22, glutamate 83, and lysine 122. Residues glycine 219–glutamine 381 enclose the TrmE-type G domain. Residue asparagine 229 participates in K(+) binding. Residues asparagine 229–serine 234, serine 248–threonine 254, and aspartate 273–glycine 276 contribute to the GTP site. Serine 233 contributes to the Mg(2+) binding site. The K(+) site is built by serine 248, isoleucine 250, and threonine 253. Residue threonine 254 coordinates Mg(2+). Lysine 460 contributes to the (6S)-5-formyl-5,6,7,8-tetrahydrofolate binding site.

It belongs to the TRAFAC class TrmE-Era-EngA-EngB-Septin-like GTPase superfamily. TrmE GTPase family. Homodimer. Heterotetramer of two MnmE and two MnmG subunits. K(+) is required as a cofactor.

The protein resides in the cytoplasm. Its function is as follows. Exhibits a very high intrinsic GTPase hydrolysis rate. Involved in the addition of a carboxymethylaminomethyl (cmnm) group at the wobble position (U34) of certain tRNAs, forming tRNA-cmnm(5)s(2)U34. This chain is tRNA modification GTPase MnmE, found in Aster yellows witches'-broom phytoplasma (strain AYWB).